The primary structure comprises 403 residues: Probable tubulin--tyrosine ligase C12B10.04 (403 aa).

The TTL domain maps to 9–386; it reads KVYVNYRDEY…PFFESSTKRN (378 aa).

It belongs to the tubulin--tyrosine ligase family. It depends on Mg(2+) as a cofactor. Requires K(+) as cofactor.

It is found in the cytoplasm. It localises to the nucleus. The enzyme catalyses C-terminal L-alpha-aminoacyl-L-glutamyl-L-glutamyl-[tubulin] + L-tyrosine + ATP = C-terminal L-alpha-aminoacyl-L-glutamyl-L-glutamyl-L-tyrosyl-[tubulin] + ADP + phosphate + H(+). Probable tubulin--tyrosine ligase. This is Probable tubulin--tyrosine ligase C12B10.04 from Schizosaccharomyces pombe (strain 972 / ATCC 24843) (Fission yeast).